Here is a 398-residue protein sequence, read N- to C-terminus: Nematocin receptor 2 (398 aa).

The Extracellular portion of the chain corresponds to 1–25 (MNNNTLNITNQRTAAAMSQIYFLVV). N-linked (GlcNAc...) asparagine glycans are attached at residues Asn3 and Asn7. A helical transmembrane segment spans residues 26 to 46 (YQTAVMIVSLLGNLFLLFVIF). Topologically, residues 47-58 (RANQVMKRRVSP) are cytoplasmic. A helical transmembrane segment spans residues 59 to 79 (VQLLIIHTCVADLLFALLSLG). At 80 to 99 (TEILTLRTYPQYYGSNFVCK) the chain is on the extracellular side. A disulfide bond links Cys98 and Cys173. Residues 100–120 (LMRYVQMFPMYASPFLLVAIS) form a helical membrane-spanning segment. The Cytoplasmic portion of the chain corresponds to 121–143 (ADRYQAICRPLAHFRSSRYRRPN). A helical membrane pass occupies residues 144 to 164 (WMAAIAWGLALVLSIPQFFVW). Topologically, residues 165 to 187 (TKHSKTGRCSTIYGQNKNTVKIT) are extracellular. The chain crosses the membrane as a helical span at residues 188–208 (YVIMFNTLAWLLPSILAAVFY). At 209 to 271 (YCVCKAVRLS…DRKRVQTVRL (63 aa)) the chain is on the cytoplasmic side. A helical transmembrane segment spans residues 272–292 (TITIVACNFFLWMPFCLINVI). Topologically, residues 293-302 (QALWPEISHI) are extracellular. Residues 303–325 (MFINYVAILGNLNSCLNPWIYIL) traverse the membrane as a helical segment. Residues 326–398 (FNRSHVRKAL…DSTSLKTNSN (73 aa)) lie on the Cytoplasmic side of the membrane.

This sequence belongs to the G-protein coupled receptor 1 family. Vasopressin/oxytocin receptor subfamily. Detected in the ADL sensory neurons, the RMED and RMEV motor neurons, and the PQR tail neuron. In males, detected in SPC tail neurons involved in spicule penetration and sperm transfer, and male-specific oblique muscles involved in vulval contact.

It localises to the cell membrane. Its function is as follows. Not directly activated by nematocin. May modulate activity of the nematocin receptor ntr-1, leading to reduced intracellular cAMP production. Plays a role in male mating behavior. The polypeptide is Nematocin receptor 2 (Caenorhabditis elegans).